Consider the following 220-residue polypeptide: MKLNKYIDHTLLKQDAKKKQIDSLLSEAREYGFASVCVNPTWVEHAKKGLEGTDVKVCTVVGFPLGATTSAVKAFETKEAIQNGADEIDMVINVGALKSGNLALVESDIRAVVEASGDKLVKVIIEACLLTDQEKIVVCQLAQKAGADFVKTSTGFSTGGATIADVTLMRETVGSDMGVKAAGGARSYADALAFVEAGATRIGTSAGVAILKGELADGDY.

The active-site Proton donor/acceptor is the Asp-89. Catalysis depends on Lys-151, which acts as the Schiff-base intermediate with acetaldehyde. The Proton donor/acceptor role is filled by Lys-180.

It belongs to the DeoC/FbaB aldolase family. DeoC type 1 subfamily.

Its subcellular location is the cytoplasm. It carries out the reaction 2-deoxy-D-ribose 5-phosphate = D-glyceraldehyde 3-phosphate + acetaldehyde. It functions in the pathway carbohydrate degradation; 2-deoxy-D-ribose 1-phosphate degradation; D-glyceraldehyde 3-phosphate and acetaldehyde from 2-deoxy-alpha-D-ribose 1-phosphate: step 2/2. In terms of biological role, catalyzes a reversible aldol reaction between acetaldehyde and D-glyceraldehyde 3-phosphate to generate 2-deoxy-D-ribose 5-phosphate. In Streptococcus pneumoniae serotype 2 (strain D39 / NCTC 7466), this protein is Deoxyribose-phosphate aldolase.